Reading from the N-terminus, the 283-residue chain is Extensin (283 aa).

Residues 1-24 (MMGGKAALLLALVAVTLAVVEIQA) form the signal peptide. The tract at residues 27 to 283 (GYGYGGGYPT…PPPPPPPPYY (257 aa)) is disordered. The segment covering 36–45 (TPTPKPPAKG) has biased composition (pro residues). Basic and acidic residues predominate over residues 46-69 (PKPEKPPTKGHGHKPEKPPKEHKP). Pro residues-rich tracts occupy residues 70-264 (TPPT…PTYT) and 272-283 (SSPPPPPPPPYY).

In terms of processing, hydroxylated on proline residues in the S-P-P-P-P repeat. Post-translationally, O-glycosylated on hydroxyprolines.

It is found in the secreted. The protein localises to the primary cell wall. Structural component in primary cell wall. This Sorghum bicolor (Sorghum) protein is Extensin (HRGP).